The sequence spans 105 residues: Thioredoxin (105 aa).

The Thioredoxin domain occupies 1-105; sequence VQVISSYDQF…LQAAITQHSA (105 aa). Catalysis depends on nucleophile residues Cys-29 and Cys-32. Cys-29 and Cys-32 are disulfide-bonded.

Belongs to the thioredoxin family. As to quaternary structure, monomer.

Participates in various redox reactions through the reversible oxidation of its active center dithiol to a disulfide and catalyzes dithiol-disulfide exchange reactions. This is Thioredoxin from Malassezia sympodialis (Atopic eczema-associated yeast).